The sequence spans 199 residues: Putative acetyltransferase SAV2555 (199 aa).

It belongs to the transferase hexapeptide repeat family.

This chain is Putative acetyltransferase SAV2555, found in Staphylococcus aureus (strain Mu50 / ATCC 700699).